The following is a 191-amino-acid chain: Decorin-binding protein A (191 aa).

The first 29 residues, 1–29, serve as a signal peptide directing secretion; the sequence is MIKCNNKTFNNLLKLTILVNLLISCGLTG.

It belongs to the decorin-binding protein family.

Binds to decorin which may mediate the adherence of B.burgdorferi to collagen fibers in skin and other tissues. The polypeptide is Decorin-binding protein A (dbpA) (Borreliella burgdorferi (strain ATCC 35210 / DSM 4680 / CIP 102532 / B31) (Borrelia burgdorferi)).